We begin with the raw amino-acid sequence, 237 residues long: RING-H2 finger protein ATL57 (237 aa).

Residues 51–71 (ALTIFILLVALFFMGFFSVYF) traverse the membrane as a helical segment. An RING-type; atypical zinc finger spans residues 140-182 (CVICLSDFEEGETVKVIPHCGHVFHVDCVDTWLSSYVTCPLCR).

The protein belongs to the RING-type zinc finger family. ATL subfamily.

Its subcellular location is the membrane. The catalysed reaction is S-ubiquitinyl-[E2 ubiquitin-conjugating enzyme]-L-cysteine + [acceptor protein]-L-lysine = [E2 ubiquitin-conjugating enzyme]-L-cysteine + N(6)-ubiquitinyl-[acceptor protein]-L-lysine.. It functions in the pathway protein modification; protein ubiquitination. This Arabidopsis thaliana (Mouse-ear cress) protein is RING-H2 finger protein ATL57 (ATL57).